The primary structure comprises 325 residues: Glutarate 2-hydroxylase (325 aa).

Fe cation-binding residues include His-160, Asp-162, and His-292.

The protein belongs to the glutarate hydroxylase family. In terms of assembly, homotetramer. The cofactor is Fe(2+).

It carries out the reaction glutarate + 2-oxoglutarate + O2 = (S)-2-hydroxyglutarate + succinate + CO2. Its pathway is amino-acid degradation. Its function is as follows. Acts as an alpha-ketoglutarate-dependent dioxygenase catalyzing hydroxylation of glutarate (GA) to L-2-hydroxyglutarate (L2HG). Functions in a L-lysine degradation pathway that proceeds via cadaverine, glutarate and L-2-hydroxyglutarate. Is extremely specific for glutarate, but it can use both 2-oxoglutarate and 2-oxoadipate (2OA) as a cosubstrate for L2HG formation. This Pseudomonas putida (strain ATCC 47054 / DSM 6125 / CFBP 8728 / NCIMB 11950 / KT2440) protein is Glutarate 2-hydroxylase.